A 129-amino-acid chain; its full sequence is Small ribosomal subunit protein uS11 (129 aa).

Belongs to the universal ribosomal protein uS11 family. As to quaternary structure, part of the 30S ribosomal subunit. Interacts with proteins S7 and S18. Binds to IF-3.

In terms of biological role, located on the platform of the 30S subunit, it bridges several disparate RNA helices of the 16S rRNA. Forms part of the Shine-Dalgarno cleft in the 70S ribosome. In Bartonella henselae (strain ATCC 49882 / DSM 28221 / CCUG 30454 / Houston 1) (Rochalimaea henselae), this protein is Small ribosomal subunit protein uS11.